The following is a 785-amino-acid chain: uncharacterized protein (785 aa).

Positions 53-65 (KNTLTGSHGSNDL) are enriched in polar residues. The disordered stretch occupies residues 53-162 (KNTLTGSHGS…RKAADEQGPI (110 aa)). Acidic residues predominate over residues 66 to 79 (ATDESLDSPEDEEA). The span at 81–94 (SPLQLGTPTSTTSG) shows a compositional bias: polar residues. S215 carries the post-translational modification Phosphoserine. 2 disordered regions span residues 571–590 (KVVD…TSVN) and 631–657 (DSSG…RIQF). Residues 575 to 584 (SDDEESDSDE) are compositionally biased toward acidic residues. S667 is modified (phosphoserine). The interval 693 to 785 (DPKMKFTSHP…FGSIFKKVFG (93 aa)) is disordered. The segment covering 725–739 (RKAHHHHHHHNHVSR) has biased composition (basic residues). Residues 776-785 (FGSIFKKVFG) show a composition bias toward low complexity.

This is an uncharacterized protein from Saccharomyces cerevisiae (strain ATCC 204508 / S288c) (Baker's yeast).